Consider the following 250-residue polypeptide: MAKLTARDLKLSFGNVEVLKGVNLEIKERTITALMGPSGSGKSTLLRVFNRLIELYPEARVSGEVLLDGQDVFKMDVIELRRRVQMIFQIPNPIPNLSIFENVALGLKLNRIVKSKKELEARVRQALEKAQLWDEVKNRLDAPAGKLSGGQQQRLCVARALAFDPEVLLADEPTANLDPENTAKLESLFLELKKDMTIVLVTHFPAQAARVSDYVAFLYKGQIVEVGPTKEVFTNPRHELTEKYVTGKLY.

The ABC transporter domain maps to 4 to 245 (LTARDLKLSF…PRHELTEKYV (242 aa)). Residue 36–43 (GPSGSGKS) coordinates ATP.

Belongs to the ABC transporter superfamily. Phosphate importer (TC 3.A.1.7) family. The complex is composed of two ATP-binding proteins (PstB), two transmembrane proteins (PstC and PstA) and a solute-binding protein (PstS).

It is found in the cell membrane. The catalysed reaction is phosphate(out) + ATP + H2O = ADP + 2 phosphate(in) + H(+). Functionally, part of the ABC transporter complex PstSACB involved in phosphate import. Responsible for energy coupling to the transport system. In Pyrobaculum aerophilum (strain ATCC 51768 / DSM 7523 / JCM 9630 / CIP 104966 / NBRC 100827 / IM2), this protein is Phosphate import ATP-binding protein PstB.